Here is a 116-residue protein sequence, read N- to C-terminus: UPF0482 protein ECA2253 (116 aa).

Residues 1–31 (MNHYSFSSLIRALIPLSLVIVSAVWQPAALA) form the signal peptide.

This sequence belongs to the UPF0482 family.

The protein is UPF0482 protein ECA2253 of Pectobacterium atrosepticum (strain SCRI 1043 / ATCC BAA-672) (Erwinia carotovora subsp. atroseptica).